Reading from the N-terminus, the 237-residue chain is MTVLPALPPLDDLETLNVHLETLSAENRVCWALERGPDHPALSSSFGAQSAVMLHLLTRFAPDIPVILVDTGYLFPETYRFADTLTERLKLNLKVYQPLRSGAWTEARHGRLWEQGIDGINQYNTLHKVEPMRRALEELQVGTWFTGLRRGQSSTRTQTSIVQQRDERYKISPIADWTDRDIWEYMKHHDLPYHPLWEQGYVSIGDIHTTRPLEPGMREEDTRFFGFKRECGIHENI.

Cys-231 functions as the Nucleophile; cysteine thiosulfonate intermediate in the catalytic mechanism.

It belongs to the PAPS reductase family. CysH subfamily.

It localises to the cytoplasm. The enzyme catalyses [thioredoxin]-disulfide + sulfite + adenosine 3',5'-bisphosphate + 2 H(+) = [thioredoxin]-dithiol + 3'-phosphoadenylyl sulfate. The protein operates within sulfur metabolism; hydrogen sulfide biosynthesis; sulfite from sulfate: step 3/3. Its function is as follows. Catalyzes the formation of sulfite from phosphoadenosine 5'-phosphosulfate (PAPS) using thioredoxin as an electron donor. The protein is Phosphoadenosine 5'-phosphosulfate reductase of Xylella fastidiosa (strain 9a5c).